We begin with the raw amino-acid sequence, 270 residues long: 3-phenylpropionate-dihydrodiol/cinnamic acid-dihydrodiol dehydrogenase (270 aa).

10–34 (FITGGGSGLGLALVERFIEEGAQVA) is an NAD(+) binding site. Position 143 (Ser143) interacts with substrate. The active-site Proton acceptor is Tyr156.

Belongs to the short-chain dehydrogenases/reductases (SDR) family.

It carries out the reaction 3-(cis-5,6-dihydroxycyclohexa-1,3-dien-1-yl)propanoate + NAD(+) = 3-(2,3-dihydroxyphenyl)propanoate + NADH + H(+). The catalysed reaction is (2E)-3-(cis-5,6-dihydroxycyclohexa-1,3-dien-1-yl)prop-2-enoate + NAD(+) = (2E)-3-(2,3-dihydroxyphenyl)prop-2-enoate + NADH + H(+). The protein operates within aromatic compound metabolism; 3-phenylpropanoate degradation. Functionally, converts 3-phenylpropionate-dihydrodiol (PP-dihydrodiol) and cinnamic acid-dihydrodiol (CI-dihydrodiol) into 3-(2,3-dihydroxylphenyl)propanoic acid (DHPP) and 2,3-dihydroxicinnamic acid (DHCI), respectively. In Escherichia coli O7:K1 (strain IAI39 / ExPEC), this protein is 3-phenylpropionate-dihydrodiol/cinnamic acid-dihydrodiol dehydrogenase.